A 148-amino-acid polypeptide reads, in one-letter code: Protein E6 (148 aa).

Zinc fingers lie at residues 29–65 and 102–138; these read CVFC…CARC and CYMC…CLYC.

Belongs to the papillomaviridae E6 protein family. In terms of assembly, forms homodimers. Interacts with ubiquitin-protein ligase UBE3A/E6-AP; this interaction stimulates UBE3A ubiquitin activity. Interacts with host TP53 and EP300; this interaction inhibits TP53 activity.

It is found in the host cytoplasm. The protein localises to the host nucleus. Plays a major role in the induction and maintenance of cellular transformation. E6 associates with host UBE3A/E6-AP ubiquitin-protein ligase and modulates its activity. Sequesters tumor suppressor TP53 in the host cytoplasm and modulates its activity by interacting with host EP300 that results in the reduction of TP53 acetylation and activation. In turn, apoptosis induced by DNA damage is inhibited. E6 also protects host keratinocytes from apoptosis by mediating the degradation of host BAK1. May also inhibit host immune response. This is Protein E6 from Homo sapiens (Human).